The sequence spans 272 residues: Putative phosphoenolpyruvate synthase regulatory protein (272 aa).

152 to 159 lines the ADP pocket; it reads GVSRCGKT.

Belongs to the pyruvate, phosphate/water dikinase regulatory protein family. PSRP subfamily.

The enzyme catalyses [pyruvate, water dikinase] + ADP = [pyruvate, water dikinase]-phosphate + AMP + H(+). It catalyses the reaction [pyruvate, water dikinase]-phosphate + phosphate + H(+) = [pyruvate, water dikinase] + diphosphate. Bifunctional serine/threonine kinase and phosphorylase involved in the regulation of the phosphoenolpyruvate synthase (PEPS) by catalyzing its phosphorylation/dephosphorylation. This chain is Putative phosphoenolpyruvate synthase regulatory protein, found in Ectopseudomonas mendocina (strain ymp) (Pseudomonas mendocina).